Reading from the N-terminus, the 245-residue chain is Adenosylcobinamide-GDP ribazoletransferase (245 aa).

5 helical membrane passes run 31 to 51 (FGRA…VLYA), 61 to 81 (PLLQ…ALHL), 113 to 133 (VAVV…AALL), 138 to 158 (AGLL…LFLT), and 192 to 212 (LAFG…FAWL).

This sequence belongs to the CobS family. Requires Mg(2+) as cofactor.

It localises to the cell inner membrane. It catalyses the reaction alpha-ribazole + adenosylcob(III)inamide-GDP = adenosylcob(III)alamin + GMP + H(+). The enzyme catalyses alpha-ribazole 5'-phosphate + adenosylcob(III)inamide-GDP = adenosylcob(III)alamin 5'-phosphate + GMP + H(+). The protein operates within cofactor biosynthesis; adenosylcobalamin biosynthesis; adenosylcobalamin from cob(II)yrinate a,c-diamide: step 7/7. In terms of biological role, joins adenosylcobinamide-GDP and alpha-ribazole to generate adenosylcobalamin (Ado-cobalamin). Also synthesizes adenosylcobalamin 5'-phosphate from adenosylcobinamide-GDP and alpha-ribazole 5'-phosphate. The polypeptide is Adenosylcobinamide-GDP ribazoletransferase (Pseudomonas aeruginosa (strain ATCC 15692 / DSM 22644 / CIP 104116 / JCM 14847 / LMG 12228 / 1C / PRS 101 / PAO1)).